Consider the following 303-residue polypeptide: Paired immunoglobulin-like type 2 receptor alpha (303 aa).

The signal sequence occupies residues 1 to 19 (MGRPLLLPLLPLLLPPAFL). Topologically, residues 20–197 (QPSGSTGSGP…DSWHISLETA (178 aa)) are extracellular. Residues 32–150 (LYGVTQPKHL…SIEGTKLSIT (119 aa)) form the Ig-like V-type domain. N-linked (GlcNAc...) asparagine glycosylation is present at N100. The helical transmembrane segment at 198-218 (VGVAVAVTVLGIMILGLICLL) threads the bilayer. Residues 219-303 (RWRRRKGQQR…NETLYSVLKA (85 aa)) are Cytoplasmic-facing. The segment at 226-296 (QQRTKATTPA…RPLKSPQNET (71 aa)) is disordered. Short sequence motifs (ITIM motif) lie at residues 267–272 (IVYASL) and 296–301 (TLYSVL).

As to quaternary structure, monomer. Interacts with PTPN6/SHP-1 and PTPN11/SHP-2 upon tyrosine phosphorylation. (Microbial infection) Interacts with herpes simplex virus 1 glycoprotein B. Post-translationally, according to PubMed:10660620, N- and O-glycosylated. According to PubMed:10903717, only N-glycosylated. Phosphorylated on tyrosine residues. In terms of tissue distribution, predominantly detected in hemopoietic tissues and is expressed by monocytes, macrophages, and granulocytes, but not by lymphocytes. Also strongly expressed by dendritic cells (DC); preferentially by CD14+/CD1a- DC derived from CD34+ progenitors. Also expressed by CD11c+ blood and tonsil DC, but not by CD11c- DC precursors.

Its subcellular location is the cell membrane. It is found in the secreted. Its function is as follows. Paired receptors consist of highly related activating and inhibitory receptors and are widely involved in the regulation of the immune system. PILRA is thought to act as a cellular signaling inhibitory receptor by recruiting cytoplasmic phosphatases like PTPN6/SHP-1 and PTPN11/SHP-2 via their SH2 domains that block signal transduction through dephosphorylation of signaling molecules. Receptor for PIANP. In terms of biological role, (Microbial infection) Acts as an entry co-receptor for herpes simplex virus 1. This Homo sapiens (Human) protein is Paired immunoglobulin-like type 2 receptor alpha (PILRA).